Here is a 393-residue protein sequence, read N- to C-terminus: Small ribosomal subunit protein bS1 (393 aa).

S1 motif domains follow at residues 16–90 (GDKV…LSKR), 108–173 (NQTI…LSRK), 194–262 (GDVI…LSIK), and 279–348 (GDVI…LSIK). A compositionally biased stretch (polar residues) spans 356–369 (VIESDSETTQSYLD). A disordered region spans residues 356-381 (VIESDSETTQSYLDNGSDDEDNPTLG).

This sequence belongs to the bacterial ribosomal protein bS1 family.

In terms of biological role, binds mRNA; thus facilitating recognition of the initiation point. It is needed to translate mRNA with a short Shine-Dalgarno (SD) purine-rich sequence. The protein is Small ribosomal subunit protein bS1 (rpsA) of Staphylococcus saprophyticus subsp. saprophyticus (strain ATCC 15305 / DSM 20229 / NCIMB 8711 / NCTC 7292 / S-41).